A 1157-amino-acid polypeptide reads, in one-letter code: uncharacterized protein (1157 aa).

Residues 1–10 (MDPHWKRHDS) show a composition bias toward basic and acidic residues. Disordered stretches follow at residues 1 to 35 (MDPHWKRHDSSNIPTQPSPSASPKSNKPSSAQRFG), 159 to 233 (QTTP…SVEP), and 478 to 498 (KNQSSHRRNSSTSSGETGKGP). Composition is skewed to low complexity over residues 18 to 31 (SPSASPKSNKPSSA) and 181 to 197 (SAGTDPFSPVSPSNPNF). Polar residues predominate over residues 208 to 228 (QEWQQSPLESPLSMHSLQESL). The CSD2 domain occupies 501–574 (VWFKPSDKRI…KVEYKAILHD (74 aa)). The 314-residue stretch at 608-921 (LRDKLTFMIG…ICVQRQLREA (314 aa)) folds into the RNB domain. Positions 973-1030 (GLVKHKAFVLAVDQEYIDIVIYEFGLERRISLDLLPLSNCDFNEQKHELYLSWRTNAS) constitute a DIS3L2 C-terminal domain. Positions 1084 to 1113 (YSKARGNDSTSKTAKSSSGNQDISGDGKLH) are disordered. Positions 1090–1106 (NDSTSKTAKSSSGNQDI) are enriched in polar residues.

This sequence belongs to the RNR ribonuclease family.

It is found in the cytoplasm. This is an uncharacterized protein from Schizosaccharomyces pombe (strain 972 / ATCC 24843) (Fission yeast).